We begin with the raw amino-acid sequence, 521 residues long: 2-isopropylmalate synthase (521 aa).

The 263-residue stretch at 12–274 (VIIFDTTLRD…WNKIDTTMLT (263 aa)) folds into the Pyruvate carboxyltransferase domain. Residues Asp21, His209, His211, and Asn245 each contribute to the Mn(2+) site. The regulatory domain stretch occupies residues 398-521 (KLLSLTVIAG…DLPVPEAAAS (124 aa)).

The protein belongs to the alpha-IPM synthase/homocitrate synthase family. LeuA type 1 subfamily. Homodimer. Requires Mn(2+) as cofactor.

It localises to the cytoplasm. The catalysed reaction is 3-methyl-2-oxobutanoate + acetyl-CoA + H2O = (2S)-2-isopropylmalate + CoA + H(+). It functions in the pathway amino-acid biosynthesis; L-leucine biosynthesis; L-leucine from 3-methyl-2-oxobutanoate: step 1/4. In terms of biological role, catalyzes the condensation of the acetyl group of acetyl-CoA with 3-methyl-2-oxobutanoate (2-ketoisovalerate) to form 3-carboxy-3-hydroxy-4-methylpentanoate (2-isopropylmalate). This Rhodopseudomonas palustris (strain BisB18) protein is 2-isopropylmalate synthase.